Reading from the N-terminus, the 630-residue chain is MKEVRVVICGDQGVGKSSLISALIQEDNVTSIPKVFPIISIPSNPDSNDDVSLVLVDTQSDSNEREYLAAEIKKANVICLVYSDNYSYERVSIFWLPYFRSLGVNVPIVLCENKSEDLDNYQGLHTIEHEMIPLINEFKEIEACILCSALEKINVNELFYMCRACVIYPITPLWDAKERTMRKATIHALSRIFFLIDKNNDDLLSVDELNSLSEKCFSKNLSIEDASEILSKVKEICPEGVYEGQLTLPGFLAYNRVQVENGKQESTWGILRAFHYTDSLSLDDSYLSPKFEVAPGQIVELSPKGYRFLVDLFYQFDRDNDGALNNEELSALFRHTPGLPEIWVSSQFPNSTVLNEHGYVTYNGWLAQWSMITLFDYKTTLAYLAYLGFDTDGRGHNTDALKVMRKRVSQNRKVSKYDRNVFLCFVVGSKSCGKTALLSSFINNNTNRLTPNTVVNSVEFQSTQRYLVLSEIGETDLDILAEPKSLEACDILCLLYDSSNPNSFSFIANLLNLYPDLQKIPCVFAATKADLDRQQQRYPVQPDEFTKQLGLPSPTHISTAAIWNTSKEFFIQLAESAQYPASSIIRIPEEDSNKTNYQLVAALTAFGALLLSVGGSLTWKIIKHQYYSKK.

In terms of domain architecture, Miro 1 spans 1–168 (MKEVRVVICG…FYMCRACVIY (168 aa)). Topologically, residues 1–598 (MKEVRVVICG…EEDSNKTNYQ (598 aa)) are cytoplasmic. Residues 10–17 (GDQGVGKS), 57–61 (DTQSD), and 113–116 (NKSE) contribute to the GTP site. 2 EF-hand domains span residues 184–219 (ATIH…CFSK) and 304–339 (KGYR…TPGL). Ca(2+)-binding residues include Asp197, Asn199, Asp201, Glu208, Asp317, Asp319, Asp321, and Glu328. The region spanning 419 to 579 (RNVFLCFVVG…FIQLAESAQY (161 aa)) is the Miro 2 domain. Residues 428-435 (GSKSCGKT), 459-463 (EFQST), and 527-530 (TKAD) contribute to the GTP site. The helical; Anchor for type IV membrane protein transmembrane segment at 599-619 (LVAALTAFGALLLSVGGSLTW) threads the bilayer. Residues 620-630 (KIIKHQYYSKK) are Mitochondrial intermembrane-facing.

This sequence belongs to the mitochondrial Rho GTPase family.

Its subcellular location is the mitochondrion outer membrane. Functionally, mitochondrial GTPase involved in mitochondrial trafficking. Probably involved in control of anterograde transport of mitochondria and their subcellular distribution. In Schizosaccharomyces pombe (strain 972 / ATCC 24843) (Fission yeast), this protein is Mitochondrial Rho GTPase 1 (gem1).